Reading from the N-terminus, the 712-residue chain is Potassium transporter 1 (712 aa).

Over 1–19 (MNQSPSLIEQGISQQHLKT) the chain is Cytoplasmic. A helical membrane pass occupies residues 20 to 40 (LSCANVLTLAYQSLGVIYGDL). Topologically, residues 41-67 (STSPLYVYKTTFSGKLSLHEDDEEIFG) are extracellular. The chain crosses the membrane as a helical span at residues 68-88 (VFSFIFWTFTLIALFKYVFIV). Topologically, residues 89–154 (LSADDNGEGG…FFEKHPKSQK (66 aa)) are cytoplasmic. Residues 155–175 (CLLLFVLLGTCMAIGDSVLTP) traverse the membrane as a helical segment. Residues 176–189 (TISVLSAVSGVKLK) are Extracellular-facing. Residues 190–210 (IPNLHENYVVIIACIILVAIF) form a helical membrane-spanning segment. Topologically, residues 211–219 (SVQRYGTHR) are cytoplasmic. A helical transmembrane segment spans residues 220 to 240 (VAFIFAPISTAWLLSISSIGV). At 241–267 (YNTIKWNPRIVSALSPVYMYKFLRSTG) the chain is on the extracellular side. The chain crosses the membrane as a helical span at residues 268–288 (VEGWVSLGGVVLSITGVETMF). Over 289–300 (ADLGHFSSLSIK) the chain is Cytoplasmic. The chain crosses the membrane as a helical span at residues 301-321 (VAFSFFVYPCLILAYMGEAAF). Over 322 to 340 (LSKHHEDIQQSFYKAIPEP) the chain is Extracellular. Residues 341 to 361 (VFWPVFIVATFAAVVGSQAVI) traverse the membrane as a helical segment. At 362 to 392 (SATFSIISQCCALDCFPRVKIIHTSSKIHGQ) the chain is on the cytoplasmic side. Residues 393–413 (IYIPEVNWMLMCLCLAVTIGL) traverse the membrane as a helical segment. The Extracellular portion of the chain corresponds to 414–424 (RDTNMMGHAYG). A helical membrane pass occupies residues 425 to 445 (LAVTSVMLVTTCLMTLVMTIV). Residues 446–449 (WKQR) are Cytoplasmic-facing. Residues 450-470 (IITVLAFVVFFGSIELLYFSS) traverse the membrane as a helical segment. The Extracellular portion of the chain corresponds to 471 to 474 (CVYK). Residues 475 to 495 (VPEGGWIPILLSLTFMAVMYI) traverse the membrane as a helical segment. Over 496–712 (WNYGTTKKHE…LLEVGMVYYV (217 aa)) the chain is Cytoplasmic.

This sequence belongs to the HAK/KUP transporter (TC 2.A.72.3) family. In terms of tissue distribution, detected in the whole mature plant but preferentially expressed in roots and stems, and in potassium-starved plants.

The protein localises to the cell membrane. Its function is as follows. High-affinity potassium transporter that could play a major role in the uptake of potassium from the rhizosphere. May act as a low-affinity potassium transporter under high potassium concentrations. Could also transport rubidium. The sequence is that of Potassium transporter 1 (POT1) from Arabidopsis thaliana (Mouse-ear cress).